Here is a 323-residue protein sequence, read N- to C-terminus: 4-hydroxy-3-methylbut-2-enyl diphosphate reductase (323 aa).

Residue cysteine 21 coordinates [4Fe-4S] cluster. The (2E)-4-hydroxy-3-methylbut-2-enyl diphosphate site is built by histidine 50 and histidine 83. The dimethylallyl diphosphate site is built by histidine 50 and histidine 83. 2 residues coordinate isopentenyl diphosphate: histidine 50 and histidine 83. Position 105 (cysteine 105) interacts with [4Fe-4S] cluster. Histidine 133 serves as a coordination point for (2E)-4-hydroxy-3-methylbut-2-enyl diphosphate. Dimethylallyl diphosphate is bound at residue histidine 133. Histidine 133 contacts isopentenyl diphosphate. The active-site Proton donor is glutamate 135. Threonine 173 lines the (2E)-4-hydroxy-3-methylbut-2-enyl diphosphate pocket. Cysteine 203 contributes to the [4Fe-4S] cluster binding site. (2E)-4-hydroxy-3-methylbut-2-enyl diphosphate contacts are provided by serine 231, serine 232, asparagine 233, and serine 276. Dimethylallyl diphosphate is bound by residues serine 231, serine 232, asparagine 233, and serine 276. Residues serine 231, serine 232, asparagine 233, and serine 276 each coordinate isopentenyl diphosphate.

This sequence belongs to the IspH family. [4Fe-4S] cluster serves as cofactor.

It carries out the reaction isopentenyl diphosphate + 2 oxidized [2Fe-2S]-[ferredoxin] + H2O = (2E)-4-hydroxy-3-methylbut-2-enyl diphosphate + 2 reduced [2Fe-2S]-[ferredoxin] + 2 H(+). The catalysed reaction is dimethylallyl diphosphate + 2 oxidized [2Fe-2S]-[ferredoxin] + H2O = (2E)-4-hydroxy-3-methylbut-2-enyl diphosphate + 2 reduced [2Fe-2S]-[ferredoxin] + 2 H(+). Its pathway is isoprenoid biosynthesis; dimethylallyl diphosphate biosynthesis; dimethylallyl diphosphate from (2E)-4-hydroxy-3-methylbutenyl diphosphate: step 1/1. It participates in isoprenoid biosynthesis; isopentenyl diphosphate biosynthesis via DXP pathway; isopentenyl diphosphate from 1-deoxy-D-xylulose 5-phosphate: step 6/6. In terms of biological role, catalyzes the conversion of 1-hydroxy-2-methyl-2-(E)-butenyl 4-diphosphate (HMBPP) into a mixture of isopentenyl diphosphate (IPP) and dimethylallyl diphosphate (DMAPP). Acts in the terminal step of the DOXP/MEP pathway for isoprenoid precursor biosynthesis. The protein is 4-hydroxy-3-methylbut-2-enyl diphosphate reductase of Cutibacterium acnes (strain DSM 16379 / KPA171202) (Propionibacterium acnes).